The sequence spans 77 residues: Large ribosomal subunit protein uL29 (77 aa).

The protein belongs to the universal ribosomal protein uL29 family.

In Methanopyrus kandleri (strain AV19 / DSM 6324 / JCM 9639 / NBRC 100938), this protein is Large ribosomal subunit protein uL29.